Consider the following 276-residue polypeptide: Large ribosomal subunit protein uL2 (276 aa).

The tract at residues 223-276 (GAAMNPVDHPHGGGEGRAPRGRPPASPWGWQTKGLKTRKRRKPSSRFIIARRKK) is disordered. Residues 230 to 240 (DHPHGGGEGRA) are compositionally biased toward basic and acidic residues. The segment covering 257 to 276 (LKTRKRRKPSSRFIIARRKK) has biased composition (basic residues).

The protein belongs to the universal ribosomal protein uL2 family. As to quaternary structure, part of the 50S ribosomal subunit. Forms a bridge to the 30S subunit in the 70S ribosome.

One of the primary rRNA binding proteins. Required for association of the 30S and 50S subunits to form the 70S ribosome, for tRNA binding and peptide bond formation. It has been suggested to have peptidyltransferase activity; this is somewhat controversial. Makes several contacts with the 16S rRNA in the 70S ribosome. The protein is Large ribosomal subunit protein uL2 of Thermus thermophilus (strain ATCC BAA-163 / DSM 7039 / HB27).